We begin with the raw amino-acid sequence, 337 residues long: Ketol-acid reductoisomerase (NADP(+)) (337 aa).

In terms of domain architecture, KARI N-terminal Rossmann spans V3 to T183. Residues Y26–Q29, K49, S52, S54, and D84–Q87 contribute to the NADP(+) site. H109 is a catalytic residue. Residue G135 coordinates NADP(+). In terms of domain architecture, KARI C-terminal knotted spans T184 to V329. Positions 192, 196, 228, and 232 each coordinate Mg(2+). S253 provides a ligand contact to substrate.

It belongs to the ketol-acid reductoisomerase family. Mg(2+) is required as a cofactor.

The catalysed reaction is (2R)-2,3-dihydroxy-3-methylbutanoate + NADP(+) = (2S)-2-acetolactate + NADPH + H(+). It catalyses the reaction (2R,3R)-2,3-dihydroxy-3-methylpentanoate + NADP(+) = (S)-2-ethyl-2-hydroxy-3-oxobutanoate + NADPH + H(+). It functions in the pathway amino-acid biosynthesis; L-isoleucine biosynthesis; L-isoleucine from 2-oxobutanoate: step 2/4. Its pathway is amino-acid biosynthesis; L-valine biosynthesis; L-valine from pyruvate: step 2/4. In terms of biological role, involved in the biosynthesis of branched-chain amino acids (BCAA). Catalyzes an alkyl-migration followed by a ketol-acid reduction of (S)-2-acetolactate (S2AL) to yield (R)-2,3-dihydroxy-isovalerate. In the isomerase reaction, S2AL is rearranged via a Mg-dependent methyl migration to produce 3-hydroxy-3-methyl-2-ketobutyrate (HMKB). In the reductase reaction, this 2-ketoacid undergoes a metal-dependent reduction by NADPH to yield (R)-2,3-dihydroxy-isovalerate. This chain is Ketol-acid reductoisomerase (NADP(+)), found in Rhodococcus jostii (strain RHA1).